We begin with the raw amino-acid sequence, 455 residues long: Exodeoxyribonuclease 7 large subunit (455 aa).

Belongs to the XseA family. In terms of assembly, heterooligomer composed of large and small subunits.

Its subcellular location is the cytoplasm. The enzyme catalyses Exonucleolytic cleavage in either 5'- to 3'- or 3'- to 5'-direction to yield nucleoside 5'-phosphates.. Its function is as follows. Bidirectionally degrades single-stranded DNA into large acid-insoluble oligonucleotides, which are then degraded further into small acid-soluble oligonucleotides. In Lactobacillus acidophilus (strain ATCC 700396 / NCK56 / N2 / NCFM), this protein is Exodeoxyribonuclease 7 large subunit.